The chain runs to 494 residues: UDP-N-acetylmuramoyl-L-alanyl-D-glutamate--L-lysine ligase (494 aa).

Ser30 lines the UDP-N-acetyl-alpha-D-muramoyl-L-alanyl-D-glutamate pocket. Position 110–116 (110–116 (GTNGKTS)) interacts with ATP. UDP-N-acetyl-alpha-D-muramoyl-L-alanyl-D-glutamate is bound by residues 152–153 (TT), Ser179, and Arg187. Lys219 bears the N6-carboxylysine mark. Positions 406–409 (DNPA) match the L-lysine recognition motif motif.

It belongs to the MurCDEF family. MurE subfamily. Post-translationally, carboxylation is probably crucial for Mg(2+) binding and, consequently, for the gamma-phosphate positioning of ATP.

It localises to the cytoplasm. It carries out the reaction UDP-N-acetyl-alpha-D-muramoyl-L-alanyl-D-glutamate + L-lysine + ATP = UDP-N-acetyl-alpha-D-muramoyl-L-alanyl-gamma-D-glutamyl-L-lysine + ADP + phosphate + H(+). It participates in cell wall biogenesis; peptidoglycan biosynthesis. In terms of biological role, catalyzes the addition of L-lysine to the nucleotide precursor UDP-N-acetylmuramoyl-L-alanyl-D-glutamate (UMAG) in the biosynthesis of bacterial cell-wall peptidoglycan. This chain is UDP-N-acetylmuramoyl-L-alanyl-D-glutamate--L-lysine ligase, found in Staphylococcus aureus (strain Mu3 / ATCC 700698).